We begin with the raw amino-acid sequence, 358 residues long: Aminodeoxyfutalosine deaminase (358 aa).

The Zn(2+) site is built by His32 and His34. Positions 87, 154, and 188 each coordinate substrate. His215 is a Zn(2+) binding site. Catalysis depends on Glu218, which acts as the Proton donor. Asp296 provides a ligand contact to Zn(2+).

Belongs to the metallo-dependent hydrolases superfamily. Adenosine and AMP deaminases family. It depends on Zn(2+) as a cofactor.

It catalyses the reaction 6-amino-6-deoxyfutalosine + H2O + H(+) = futalosine + NH4(+). The protein operates within quinol/quinone metabolism; menaquinone biosynthesis. Its function is as follows. Catalyzes the deamination of aminodeoxyfutalosine (AFL) into futalosine (FL), a step in the biosynthesis of menaquinone (MK, vitamin K2). To a lesser extent, can also deaminate adenosine, 5'-methylthioadenosine, 5'-deoxyadenosine, and 2'-deoxyadenosine. In Streptomyces avermitilis (strain ATCC 31267 / DSM 46492 / JCM 5070 / NBRC 14893 / NCIMB 12804 / NRRL 8165 / MA-4680), this protein is Aminodeoxyfutalosine deaminase (add2).